A 118-amino-acid chain; its full sequence is Small ribosomal subunit protein uS13 (118 aa).

Residues 94 to 118 form a disordered region; it reads GLPVRGQRTKTNARTRKGPRKPIRK.

This sequence belongs to the universal ribosomal protein uS13 family. Part of the 30S ribosomal subunit. Forms a loose heterodimer with protein S19. Forms two bridges to the 50S subunit in the 70S ribosome.

Its function is as follows. Located at the top of the head of the 30S subunit, it contacts several helices of the 16S rRNA. In the 70S ribosome it contacts the 23S rRNA (bridge B1a) and protein L5 of the 50S subunit (bridge B1b), connecting the 2 subunits; these bridges are implicated in subunit movement. Contacts the tRNAs in the A and P-sites. This is Small ribosomal subunit protein uS13 from Marinobacter nauticus (strain ATCC 700491 / DSM 11845 / VT8) (Marinobacter aquaeolei).